A 943-amino-acid chain; its full sequence is MTDYKATLNLPETAFPMKAGLPQREPETLRHWNSIGLYRKLRQIGEGRQKFILHDGPPYANGNIHIGHAVNKILKDMIVRSKTLAGFDAPYVPGWDCHGLPIEHKVETTFGKNQPADLTRERCRAYAAEQVEGQKADFIRLGVLGDWENPYKTMDFANEAGEIRALAKMVEGGFVFKGLKPVNWCFDCGSALAEAEVEYQDKKSDAIDVFFPVGDADKLAAAFGLAQLDKPAGIVIWTTTPWTIPANQALNVHPDFIYALVDCGDRLLLLAEELVEGCLARYGLRGQVLATAKGEALELIRFRHPFYERFSPVYLADYVGLDAGTGIVHSAPAYGEDDFRSCKRYGMSNDEILSPVQSNGVYVESLPFFGGQFIWKANPNIVAKLAEVGCLLKHETISHSYMHCWRHKTPLIYRATAQWFVGMDSKAKDGTTLRERALAAIEQTRFVPAWGQARLHGMIAGRPDWCISRQRNWGVPIPFFLHKESGELHPRTVELMEEVARRVEQKGIEAWFRLDPAELLGAEADQYDKIADTLDVWFDSGTTHWHVMRGSHPMGHDQGPRADLYLEGSDQHRGWFHSSLLTGAAIDGHAPYRGLLTHGFTVDENGRKMSKSLGNVIAPQEITDSMGADILRLWVSATDYSGEMAVSKQILQRSADAYRRIRNTARFLLANLSGFDPAKDLLAAEDMLALDRWAVDRALLLQREVEEAFDSYRFWVVYQKVHNFCVQELGGFYLDIIKDRQYTCAADSVARRSCQSAMYHIGEALVRWIAPILAFTAEEIWQYLPGERNESVMLNTWYQGFAELPDGFALDRAFWEQVMAVKAAVNKELENRRNAKAIGGNLQAEVVLFAEPALAGRLALLGDELRFVLITSAAQVQPLGAAPADAVDTEVAGLRIQVSKSVHTKCARCWHHREDVGLDPAHPEICGRCVENIQGEGEVRQYA.

Residues 58-68 (PYANGNIHIGH) carry the 'HIGH' region motif. Glu567 lines the L-isoleucyl-5'-AMP pocket. Positions 608–612 (KMSKS) match the 'KMSKS' region motif. ATP is bound at residue Lys611. Positions 906, 909, 926, and 929 each coordinate Zn(2+).

This sequence belongs to the class-I aminoacyl-tRNA synthetase family. IleS type 1 subfamily. As to quaternary structure, monomer. The cofactor is Zn(2+).

Its subcellular location is the cytoplasm. The enzyme catalyses tRNA(Ile) + L-isoleucine + ATP = L-isoleucyl-tRNA(Ile) + AMP + diphosphate. Functionally, catalyzes the attachment of isoleucine to tRNA(Ile). As IleRS can inadvertently accommodate and process structurally similar amino acids such as valine, to avoid such errors it has two additional distinct tRNA(Ile)-dependent editing activities. One activity is designated as 'pretransfer' editing and involves the hydrolysis of activated Val-AMP. The other activity is designated 'posttransfer' editing and involves deacylation of mischarged Val-tRNA(Ile). This is Isoleucine--tRNA ligase from Azotobacter vinelandii (strain DJ / ATCC BAA-1303).